Here is a 404-residue protein sequence, read N- to C-terminus: MTPTQTNTATMQQRWETVMMNNYGTPPIVLASGNGAVVTDVDSNTYLDLLGGIAVNVLGHRHPAVIEAVTHQITTLGHTSNLYATEPSITLAEELVALLGADTQTRVFFCNSGTEANELAFKLSRLTGRTKLVAAQAAFHGRTMGSLALTGQPAKQAAFEPLPGHVTHVPYGQVDALAAAVDNDTAAVFLEPIMGESGVIVPPEGYLAAARDITTRHGALLVIDEVQTGIGRTGAFFAHQHDSITPDVVTLAKGLGGGLPIGAFLATGPAAELLTLGLHGSTFGGNPVCTAAALAVLRVLATQGLVRRAEVLGDSMRIGIESLSHPLIDQVRGRGLLLGIVLTAPRAKDIEKAARDAGFLVNATAPEVIRLAPPLIITESQIDSFITALPGILDASIAELGKKA.

Pyridoxal 5'-phosphate-binding positions include 113 to 114 (GT) and F139. Position 142 (R142) interacts with N(2)-acetyl-L-ornithine. 224–227 (DEVQ) lines the pyridoxal 5'-phosphate pocket. K253 is modified (N6-(pyridoxal phosphate)lysine). S281 is a binding site for N(2)-acetyl-L-ornithine. Residue T282 participates in pyridoxal 5'-phosphate binding.

The protein belongs to the class-III pyridoxal-phosphate-dependent aminotransferase family. ArgD subfamily. In terms of assembly, homodimer. It depends on pyridoxal 5'-phosphate as a cofactor.

The protein resides in the cytoplasm. It catalyses the reaction N(2)-acetyl-L-ornithine + 2-oxoglutarate = N-acetyl-L-glutamate 5-semialdehyde + L-glutamate. It participates in amino-acid biosynthesis; L-arginine biosynthesis; N(2)-acetyl-L-ornithine from L-glutamate: step 4/4. The polypeptide is Acetylornithine aminotransferase (Mycobacterium leprae (strain TN)).